The sequence spans 354 residues: UDP-N-acetylglucosamine--N-acetylmuramyl-(pentapeptide) pyrophosphoryl-undecaprenol N-acetylglucosamine transferase (354 aa).

UDP-N-acetyl-alpha-D-glucosamine is bound by residues serine 196 and glutamine 288.

The protein belongs to the glycosyltransferase 28 family. MurG subfamily.

The protein localises to the cell membrane. The catalysed reaction is Mur2Ac(oyl-L-Ala-gamma-D-Glu-L-Lys-D-Ala-D-Ala)-di-trans,octa-cis-undecaprenyl diphosphate + UDP-N-acetyl-alpha-D-glucosamine = beta-D-GlcNAc-(1-&gt;4)-Mur2Ac(oyl-L-Ala-gamma-D-Glu-L-Lys-D-Ala-D-Ala)-di-trans,octa-cis-undecaprenyl diphosphate + UDP + H(+). The protein operates within cell wall biogenesis; peptidoglycan biosynthesis. Functionally, cell wall formation. Catalyzes the transfer of a GlcNAc subunit on undecaprenyl-pyrophosphoryl-MurNAc-pentapeptide (lipid intermediate I) to form undecaprenyl-pyrophosphoryl-MurNAc-(pentapeptide)GlcNAc (lipid intermediate II). In Streptococcus suis (strain 98HAH33), this protein is UDP-N-acetylglucosamine--N-acetylmuramyl-(pentapeptide) pyrophosphoryl-undecaprenol N-acetylglucosamine transferase.